Here is a 398-residue protein sequence, read N- to C-terminus: L-rhamnonate dehydratase (398 aa).

2 residues coordinate substrate: H22 and R48. Positions 214, 241, and 269 each coordinate Mg(2+). The active-site Proton acceptor is H319. E339 provides a ligand contact to substrate.

This sequence belongs to the mandelate racemase/muconate lactonizing enzyme family. RhamD subfamily. Homooctamer; tetramer of dimers. Requires Mg(2+) as cofactor.

It carries out the reaction L-rhamnonate = 2-dehydro-3-deoxy-L-rhamnonate + H2O. In terms of biological role, catalyzes the dehydration of L-rhamnonate to 2-keto-3-deoxy-L-rhamnonate (KDR). This Verminephrobacter eiseniae (strain EF01-2) protein is L-rhamnonate dehydratase.